A 245-amino-acid polypeptide reads, in one-letter code: tRNA1(Val) (adenine(37)-N6)-methyltransferase (245 aa).

Belongs to the methyltransferase superfamily. tRNA (adenine-N(6)-)-methyltransferase family.

It is found in the cytoplasm. The enzyme catalyses adenosine(37) in tRNA1(Val) + S-adenosyl-L-methionine = N(6)-methyladenosine(37) in tRNA1(Val) + S-adenosyl-L-homocysteine + H(+). Its function is as follows. Specifically methylates the adenine in position 37 of tRNA(1)(Val) (anticodon cmo5UAC). This Salmonella paratyphi C (strain RKS4594) protein is tRNA1(Val) (adenine(37)-N6)-methyltransferase.